Here is a 407-residue protein sequence, read N- to C-terminus: Probable tRNA sulfurtransferase (407 aa).

The region spanning 61-165 (NEITNRLSKI…LDAIYMYEEV (105 aa)) is the THUMP domain. ATP is bound by residues 183-184 (ML), 208-209 (HF), arginine 265, glycine 287, and glutamine 296.

It belongs to the ThiI family.

The protein resides in the cytoplasm. It catalyses the reaction [ThiI sulfur-carrier protein]-S-sulfanyl-L-cysteine + a uridine in tRNA + 2 reduced [2Fe-2S]-[ferredoxin] + ATP + H(+) = [ThiI sulfur-carrier protein]-L-cysteine + a 4-thiouridine in tRNA + 2 oxidized [2Fe-2S]-[ferredoxin] + AMP + diphosphate. The catalysed reaction is [ThiS sulfur-carrier protein]-C-terminal Gly-Gly-AMP + S-sulfanyl-L-cysteinyl-[cysteine desulfurase] + AH2 = [ThiS sulfur-carrier protein]-C-terminal-Gly-aminoethanethioate + L-cysteinyl-[cysteine desulfurase] + A + AMP + 2 H(+). It participates in cofactor biosynthesis; thiamine diphosphate biosynthesis. Its function is as follows. Catalyzes the ATP-dependent transfer of a sulfur to tRNA to produce 4-thiouridine in position 8 of tRNAs, which functions as a near-UV photosensor. Also catalyzes the transfer of sulfur to the sulfur carrier protein ThiS, forming ThiS-thiocarboxylate. This is a step in the synthesis of thiazole, in the thiamine biosynthesis pathway. The sulfur is donated as persulfide by IscS. The polypeptide is Probable tRNA sulfurtransferase (Staphylococcus aureus (strain MRSA252)).